The chain runs to 434 residues: Potassium/proton antiporter CemA (434 aa).

A run of 5 helical transmembrane segments spans residues 75–95 (LLEY…SLFF), 210–230 (LASL…SFFF), 311–331 (IVLH…LFIL), 359–379 (ILLL…EIVI), and 395–415 (ISCF…YLIF).

It belongs to the CemA family.

The protein resides in the plastid. Its subcellular location is the chloroplast inner membrane. The enzyme catalyses K(+)(in) + H(+)(out) = K(+)(out) + H(+)(in). Its function is as follows. Contributes to K(+)/H(+) antiport activity by supporting proton efflux to control proton extrusion and homeostasis in chloroplasts in a light-dependent manner to modulate photosynthesis. Prevents excessive induction of non-photochemical quenching (NPQ) under continuous-light conditions. Indirectly promotes efficient inorganic carbon uptake into chloroplasts. This is Potassium/proton antiporter CemA from Marchantia polymorpha (Common liverwort).